The sequence spans 159 residues: Ribosomal RNA large subunit methyltransferase H (159 aa).

S-adenosyl-L-methionine contacts are provided by residues L76, G108, and 127-132 (FGLLTF).

It belongs to the RNA methyltransferase RlmH family. As to quaternary structure, homodimer.

The protein resides in the cytoplasm. It catalyses the reaction pseudouridine(1915) in 23S rRNA + S-adenosyl-L-methionine = N(3)-methylpseudouridine(1915) in 23S rRNA + S-adenosyl-L-homocysteine + H(+). Functionally, specifically methylates the pseudouridine at position 1915 (m3Psi1915) in 23S rRNA. In Streptococcus thermophilus (strain CNRZ 1066), this protein is Ribosomal RNA large subunit methyltransferase H.